The chain runs to 752 residues: Maltodextrin phosphorylase (752 aa).

Lysine 603 carries the post-translational modification N6-(pyridoxal phosphate)lysine.

It belongs to the glycogen phosphorylase family. Pyridoxal 5'-phosphate serves as cofactor.

The catalysed reaction is [(1-&gt;4)-alpha-D-glucosyl](n) + phosphate = [(1-&gt;4)-alpha-D-glucosyl](n-1) + alpha-D-glucose 1-phosphate. Its function is as follows. Phosphorylase is an important allosteric enzyme in carbohydrate metabolism. Enzymes from different sources differ in their regulatory mechanisms and in their natural substrates. However, all known phosphorylases share catalytic and structural properties. The protein is Maltodextrin phosphorylase (malP) of Streptococcus pneumoniae serotype 4 (strain ATCC BAA-334 / TIGR4).